The following is a 381-amino-acid chain: Glycerol-3-phosphate dehydrogenase [NAD(+)] (381 aa).

Residues 1–27 form a disordered region; it reads MTAMDRLDHVSNQLAAKRQKKNPEGKP. Residues 34–39, F66, and F122 contribute to the NAD(+) site; that span reads GSGNWG. K145 lines the substrate pocket. Residue A178 participates in NAD(+) binding. Catalysis depends on K238, which acts as the Proton acceptor. 2 residues coordinate NAD(+): R303 and Q332. 303 to 304 provides a ligand contact to substrate; sequence RN.

It belongs to the NAD-dependent glycerol-3-phosphate dehydrogenase family.

It catalyses the reaction sn-glycerol 3-phosphate + NAD(+) = dihydroxyacetone phosphate + NADH + H(+). In Pichia angusta (Yeast), this protein is Glycerol-3-phosphate dehydrogenase [NAD(+)] (GPD).